The following is a 1007-amino-acid chain: Glutamate receptor ionotropic, delta-2 (1007 aa).

An N-terminal signal peptide occupies residues Met1–Ala23. The tract at residues Asp24–Arg345 is interaction with CBLN1 homotrimer. The Extracellular portion of the chain corresponds to Asp24–Asp566. Disulfide bonds link Cys83–Cys355, Cys99–Cys131, and Cys298–Cys310. Asn293 carries an N-linked (GlcNAc...) asparagine glycan. Asn426 carries an N-linked (GlcNAc...) asparagine glycan. The Ca(2+) site is built by Glu531, Val534, and Asp535. A helical membrane pass occupies residues Leu567–Leu587. Residues Asn588–Gly635 are Cytoplasmic-facing. A helical membrane pass occupies residues Ala636–Leu656. Topologically, residues Thr657 to Ser830 are extracellular. Asn713 and Asn716 each carry an N-linked (GlcNAc...) asparagine glycan. Ca(2+) contacts are provided by Asp753, Asp755, and Ser757. A helical transmembrane segment spans residues Leu831–Leu851. Residues Glu852–Ile1007 lie on the Cytoplasmic side of the membrane. Ser883 carries the post-translational modification Phosphoserine. Phosphothreonine is present on Thr886. A Phosphoserine modification is found at Ser890. Residues Asp921–Pro991 are interaction with AP4M1. The PDZ-binding motif lies at Thr1005 to Ile1007. Ser1006 carries the phosphoserine modification.

The protein belongs to the glutamate-gated ion channel (TC 1.A.10.1) family. GRID2 subfamily. As to quaternary structure, tetramer; dimer of dimers. Interacts with EML2, MAGI2 (via PDZ domains) and AP4M1. Interacts with BECN1, GOPC, GRID2IP, SHANK1 and SHANK2. Interacts with CBLN2, but not with CBLN4. Interacts with CBLN1 (via C1q domain); the interaction is CBLN1-NRX1 complex formation-dependent; CBLN1-binding is calcium-independent; CBLN1 hexamers anchor GRID2 N-terminal domain dimers to monomeric NRXN1 isoform beta; promotes synaptogenesis and mediates the D-Serine-dependent long term depression signals and AMPA receptor endocytosis. As to expression, expressed selectively in cerebellar Purkinje cells where it is localized in dendritic spines.

It is found in the postsynaptic cell membrane. The enzyme catalyses Ca(2+)(in) = Ca(2+)(out). It catalyses the reaction Na(+)(in) = Na(+)(out). Functionally, member of the ionotropic glutamate receptor family, which plays a crucial role in synaptic organization and signal transduction in the central nervous system. Although it shares structural features with ionotropic glutamate receptors, does not bind glutamate as a primary ligand. Promotes synaptogenesis and mediates the D-Serine-dependent long term depression signals and AMPA receptor endocytosis of cerebellar parallel fiber-Purkinje cell (PF-PC) synapses through the NRX1B-CBLN1-GRID2 triad complex. In the presence of neurexins and cerebellins, forms cation-selective channels that are proposed to be gated by glycine and D-serine. However, recent research disputes this ligand-gated cation channel activity. Cation-selective ion channel activity can be triggered by GRM1 in Purkinje cells. In Mus musculus (Mouse), this protein is Glutamate receptor ionotropic, delta-2 (Grid2).